The chain runs to 628 residues: tRNA uridine 5-carboxymethylaminomethyl modification enzyme MnmG (628 aa).

13 to 18 (GAGHAG) serves as a coordination point for FAD. 281–295 (GARYCPSIEDKIKKF) lines the NAD(+) pocket.

This sequence belongs to the MnmG family. In terms of assembly, homodimer. Heterotetramer of two MnmE and two MnmG subunits. It depends on FAD as a cofactor.

It localises to the cytoplasm. In terms of biological role, NAD-binding protein involved in the addition of a carboxymethylaminomethyl (cmnm) group at the wobble position (U34) of certain tRNAs, forming tRNA-cmnm(5)s(2)U34. The protein is tRNA uridine 5-carboxymethylaminomethyl modification enzyme MnmG of Treponema denticola (strain ATCC 35405 / DSM 14222 / CIP 103919 / JCM 8153 / KCTC 15104).